The sequence spans 171 residues: S-ribosylhomocysteine lyase (171 aa).

Residues His-54, His-58, and Cys-128 each coordinate Fe cation.

Belongs to the LuxS family. Homodimer. Fe cation is required as a cofactor.

The enzyme catalyses S-(5-deoxy-D-ribos-5-yl)-L-homocysteine = (S)-4,5-dihydroxypentane-2,3-dione + L-homocysteine. Involved in the synthesis of autoinducer 2 (AI-2) which is secreted by bacteria and is used to communicate both the cell density and the metabolic potential of the environment. The regulation of gene expression in response to changes in cell density is called quorum sensing. Catalyzes the transformation of S-ribosylhomocysteine (RHC) to homocysteine (HC) and 4,5-dihydroxy-2,3-pentadione (DPD). This is S-ribosylhomocysteine lyase from Escherichia coli (strain 55989 / EAEC).